Reading from the N-terminus, the 415-residue chain is Homoserine O-succinyltransferase (415 aa).

One can recognise an AB hydrolase-1 domain in the interval 69–383 (NAVLVCHALN…PHGHDAFLLD (315 aa)). Ser-175 serves as the catalytic Nucleophile. Arg-245 contacts substrate. Residues Asp-344 and His-377 contribute to the active site. Asp-378 is a binding site for substrate.

The protein belongs to the AB hydrolase superfamily. MetX family. In terms of assembly, homodimer.

The protein resides in the cytoplasm. It catalyses the reaction L-homoserine + succinyl-CoA = O-succinyl-L-homoserine + CoA. Its pathway is amino-acid biosynthesis; L-methionine biosynthesis via de novo pathway; O-succinyl-L-homoserine from L-homoserine: step 1/1. Transfers a succinyl group from succinyl-CoA to L-homoserine, forming succinyl-L-homoserine. This chain is Homoserine O-succinyltransferase, found in Bordetella pertussis (strain Tohama I / ATCC BAA-589 / NCTC 13251).